A 459-amino-acid polypeptide reads, in one-letter code: Argininosuccinate lyase (459 aa).

The protein belongs to the lyase 1 family. Argininosuccinate lyase subfamily.

It is found in the cytoplasm. The enzyme catalyses 2-(N(omega)-L-arginino)succinate = fumarate + L-arginine. It functions in the pathway amino-acid biosynthesis; L-arginine biosynthesis; L-arginine from L-ornithine and carbamoyl phosphate: step 3/3. This chain is Argininosuccinate lyase, found in Staphylococcus aureus (strain bovine RF122 / ET3-1).